The chain runs to 655 residues: Sphingomyelin phosphodiesterase 3 (655 aa).

Residues 1 to 10 (MVLYTTPFPN) lie on the Cytoplasmic side of the membrane. Residues 11 to 31 (SCLSALHCVSWALIFPCYWLV) constitute an intramembrane region (helical). Residues 32–64 (DRLAASFIPTTYEKRQRADDPCCLQLLCTALFT) are Cytoplasmic-facing. S-palmitoyl cysteine attachment occurs at residues cysteine 53, cysteine 54, and cysteine 59. The helical intramembrane region spans 65 to 85 (PIYLALLVASLPFAFLGFLFW). Residues 86–655 (SPLQSARRPY…LMVSSGEEEA (570 aa)) are Cytoplasmic-facing. Serine 178 bears the Phosphoserine mark. Residues 210 to 319 (VEYKGDGGRH…DTSASGEPGA (110 aa)) are disordered. Basic and acidic residues-rich tracts occupy residues 212–222 (YKGDGGRHPGD) and 248–257 (GGEEGGRPPE). Over residues 279-299 (TPNHNQQDGDSGSLGSPSASR) the composition is skewed to polar residues. Residue serine 291 is modified to Phosphoserine. Glutamate 364 is a binding site for Mg(2+). 2 S-palmitoyl cysteine lipidation sites follow: cysteine 397 and cysteine 398. Histidine 639 serves as the catalytic Proton acceptor.

This sequence belongs to the neutral sphingomyelinase family. Mg(2+) is required as a cofactor. In terms of processing, palmitoylated, palmitoylation-deficient proteins are targeted for lysosomal degradation. In terms of tissue distribution, predominantly expressed in brain.

The protein resides in the golgi apparatus membrane. Its subcellular location is the cell membrane. The catalysed reaction is a sphingomyelin + H2O = phosphocholine + an N-acylsphing-4-enine + H(+). The enzyme catalyses N-(15Z-tetracosenoyl)sphing-4-enine-1-phosphocholine + H2O = N-(15Z-tetracosenoyl)-sphing-4-enine + phosphocholine + H(+). It catalyses the reaction N-(tetracosanoyl)-sphing-4-enine-1-phosphocholine + H2O = N-tetracosanoyl-sphing-4-enine + phosphocholine + H(+). It carries out the reaction an N-(acyl)-sphingosylphosphocholine + H2O = an N-acyl-sphingoid base + phosphocholine + H(+). The catalysed reaction is 1-hexadecanoyl-sn-glycero-3-phosphocholine + H2O = 1-hexadecanoyl-sn-glycerol + phosphocholine + H(+). The enzyme catalyses 1-O-octadecyl-sn-glycero-3-phosphocholine + H2O = 1-O-octadecyl-sn-glycerol + phosphocholine + H(+). It catalyses the reaction a sphingosylphosphocholine + H2O = a sphingoid base + phosphocholine + H(+). It carries out the reaction N-(hexadecanoyl)-sphing-4-enine-1-phosphocholine + H2O = N-hexadecanoylsphing-4-enine + phosphocholine + H(+). It participates in lipid metabolism; sphingolipid metabolism. Its activity is regulated as follows. Inhibited by nSMase inhibitor GW4869. Binding of anionic phospholipids (APLs) such as phosphatidylserine (PS) and phosphatidic acid (PA) increases enzymatic activity. In terms of biological role, catalyzes the hydrolysis of sphingomyelin to form ceramide and phosphocholine. Ceramide mediates numerous cellular functions, such as apoptosis and growth arrest, and is capable of regulating these 2 cellular events independently. Also hydrolyzes sphingosylphosphocholine. Regulates the cell cycle by acting as a growth suppressor in confluent cells. Probably acts as a regulator of postnatal development and participates in bone and dentin mineralization. Binds to anionic phospholipids (APLs) such as phosphatidylserine (PS) and phosphatidic acid (PA) that modulate enzymatic activity and subcellular location. May be involved in IL-1-beta-induced JNK activation in hepatocytes. May act as a mediator in transcriptional regulation of NOS2/iNOS via the NF-kappa-B activation under inflammatory conditions. This Homo sapiens (Human) protein is Sphingomyelin phosphodiesterase 3.